The sequence spans 446 residues: MTEQKRKIEKLTGVKGMNDILPQDAGLWEFFEATVKSLLRAYGYQNIRTPIVEHTQLFTRGIGEVTDIVEKEMYSFTDALNGENLTMRPENTAAVVRASIEHNMLYDGPKRLWYIGPMFRHERPQRGRYRQFHQVGVEALGFAGPDADAEIIMMCQRLWDDLGLTGIKLEINSLGLAEERAAHRVELIKYLEQFADVLDEDAKRRLYTNPLRVLDTKNPALQEIAQNAPKLIDFLGDESRAHFEGLQRLLLANNIPFKINPRLVRGLDYYNLTVFEWVTDKLGAQGTVAAGGRYDPLIEQLGGKPTAACGWAMGIERILELLKEEDLAPEQEGVDVYVVHQGETAREQAFIAAERLRDTGLDVIFHCSADGAPASFKSQMKRADASGAAFAVIFGEEEVANGTVGVKALRGAGEEGEKNVQQTVPVESLTEFLINAMVASAEDGDD.

It belongs to the class-II aminoacyl-tRNA synthetase family. As to quaternary structure, homodimer.

It localises to the cytoplasm. The catalysed reaction is tRNA(His) + L-histidine + ATP = L-histidyl-tRNA(His) + AMP + diphosphate + H(+). The sequence is that of Histidine--tRNA ligase from Burkholderia ambifaria (strain MC40-6).